Here is a 216-residue protein sequence, read N- to C-terminus: Pyrrolidone-carboxylate peptidase (216 aa).

Active-site residues include glutamate 80, cysteine 143, and histidine 168.

It belongs to the peptidase C15 family. In terms of assembly, homotetramer.

The protein resides in the cytoplasm. The catalysed reaction is Release of an N-terminal pyroglutamyl group from a polypeptide, the second amino acid generally not being Pro.. Functionally, removes 5-oxoproline from various penultimate amino acid residues except L-proline. The chain is Pyrrolidone-carboxylate peptidase from Cupriavidus taiwanensis (strain DSM 17343 / BCRC 17206 / CCUG 44338 / CIP 107171 / LMG 19424 / R1) (Ralstonia taiwanensis (strain LMG 19424)).